The sequence spans 721 residues: Polyribonucleotide nucleotidyltransferase (721 aa).

Residues D495 and D501 each coordinate Mg(2+). The KH domain occupies 562-621 (PRLLSFRIDPELIGTVIGPGGRTIKGITERTNTKIDIEDGGIVTIASHDGAAAEEAQKII). The 69-residue stretch at 631–699 (GEVFSGSITR…NRGRINLTLR (69 aa)) folds into the S1 motif domain.

This sequence belongs to the polyribonucleotide nucleotidyltransferase family. Mg(2+) serves as cofactor.

It localises to the cytoplasm. The catalysed reaction is RNA(n+1) + phosphate = RNA(n) + a ribonucleoside 5'-diphosphate. Functionally, involved in mRNA degradation. Catalyzes the phosphorolysis of single-stranded polyribonucleotides processively in the 3'- to 5'-direction. The protein is Polyribonucleotide nucleotidyltransferase of Synechococcus sp. (strain CC9605).